Here is a 202-residue protein sequence, read N- to C-terminus: MENTQENPTSQNPTPADEAARQAAEAASGEPQDQARQPAAAAGEQPAQAQPAGAEAALAEAQAKLAELQESFLRAKAETENVRRRGQEDVAKAHKFAIESFAEHLLPVMDSLEAAVAHSTDDLAKVREGVELTLRQLTGALEKGKVVALNPVGEKFDPHRHQAISMVPADQEPNTVVAVLQKGYVIADRVLRPALVTVAAPK.

Residues 1 to 14 (MENTQENPTSQNPT) are compositionally biased toward polar residues. The interval 1–58 (MENTQENPTSQNPTPADEAARQAAEAASGEPQDQARQPAAAAGEQPAQAQPAGAEAAL) is disordered. Residues 21–58 (RQAAEAASGEPQDQARQPAAAAGEQPAQAQPAGAEAAL) are compositionally biased toward low complexity.

The protein belongs to the GrpE family. As to quaternary structure, homodimer.

Its subcellular location is the cytoplasm. Its function is as follows. Participates actively in the response to hyperosmotic and heat shock by preventing the aggregation of stress-denatured proteins, in association with DnaK and GrpE. It is the nucleotide exchange factor for DnaK and may function as a thermosensor. Unfolded proteins bind initially to DnaJ; upon interaction with the DnaJ-bound protein, DnaK hydrolyzes its bound ATP, resulting in the formation of a stable complex. GrpE releases ADP from DnaK; ATP binding to DnaK triggers the release of the substrate protein, thus completing the reaction cycle. Several rounds of ATP-dependent interactions between DnaJ, DnaK and GrpE are required for fully efficient folding. The chain is Protein GrpE from Paraburkholderia phymatum (strain DSM 17167 / CIP 108236 / LMG 21445 / STM815) (Burkholderia phymatum).